The chain runs to 194 residues: dITP/XTP pyrophosphatase (194 aa).

8–13 (TSNPGK) contributes to the substrate binding site. Mg(2+) is bound by residues glutamate 38 and aspartate 67. Catalysis depends on aspartate 67, which acts as the Proton acceptor. Residues serine 68, 152–155 (FGYD), lysine 175, and 180–181 (HR) each bind substrate.

The protein belongs to the HAM1 NTPase family. In terms of assembly, homodimer. It depends on Mg(2+) as a cofactor.

The enzyme catalyses XTP + H2O = XMP + diphosphate + H(+). It catalyses the reaction dITP + H2O = dIMP + diphosphate + H(+). The catalysed reaction is ITP + H2O = IMP + diphosphate + H(+). Its function is as follows. Pyrophosphatase that catalyzes the hydrolysis of nucleoside triphosphates to their monophosphate derivatives, with a high preference for the non-canonical purine nucleotides XTP (xanthosine triphosphate), dITP (deoxyinosine triphosphate) and ITP. Seems to function as a house-cleaning enzyme that removes non-canonical purine nucleotides from the nucleotide pool, thus preventing their incorporation into DNA/RNA and avoiding chromosomal lesions. This chain is dITP/XTP pyrophosphatase, found in Legionella pneumophila (strain Lens).